A 349-amino-acid polypeptide reads, in one-letter code: D-alanine--D-alanine ligase (349 aa).

Positions 132–335 (KHVFEAVGVP…YSDLIEKLVD (204 aa)) constitute an ATP-grasp domain. 162–217 (VEKLEFPVFVKPANMGSSVGISKVDDLADLQPALSEAYKYDNRVVIEQGVDAREIE) is a binding site for ATP. Residues Asp289, Glu302, and Asn304 each coordinate Mg(2+).

Belongs to the D-alanine--D-alanine ligase family. Mg(2+) is required as a cofactor. It depends on Mn(2+) as a cofactor.

It is found in the cytoplasm. It catalyses the reaction 2 D-alanine + ATP = D-alanyl-D-alanine + ADP + phosphate + H(+). Its pathway is cell wall biogenesis; peptidoglycan biosynthesis. Its function is as follows. Cell wall formation. The chain is D-alanine--D-alanine ligase from Lactococcus lactis subsp. cremoris (strain SK11).